We begin with the raw amino-acid sequence, 674 residues long: UvrABC system protein C (674 aa).

In terms of domain architecture, GIY-YIG spans 16–95 (TNPGVYRFRD…IKEFKPRFNV (80 aa)). A UVR domain is found at 207–242 (KRFTNKLEKQMAAAVARLDYEQAARIRDDITALRKV).

The protein belongs to the UvrC family. Interacts with UvrB in an incision complex.

The protein localises to the cytoplasm. In terms of biological role, the UvrABC repair system catalyzes the recognition and processing of DNA lesions. UvrC both incises the 5' and 3' sides of the lesion. The N-terminal half is responsible for the 3' incision and the C-terminal half is responsible for the 5' incision. The chain is UvrABC system protein C from Pseudarthrobacter chlorophenolicus (strain ATCC 700700 / DSM 12829 / CIP 107037 / JCM 12360 / KCTC 9906 / NCIMB 13794 / A6) (Arthrobacter chlorophenolicus).